The sequence spans 623 residues: Chaperone protein DnaK (623 aa).

Thr175 carries the phosphothreonine; by autocatalysis modification. The disordered stretch occupies residues 580 to 623 (PEGAQGAGFDPNNMGGANAGNASAENDKKDDNVVDADYKVEDDK). The segment covering 591–603 (NNMGGANAGNASA) has biased composition (low complexity). Over residues 604 to 623 (ENDKKDDNVVDADYKVEDDK) the composition is skewed to basic and acidic residues.

Belongs to the heat shock protein 70 family.

Its function is as follows. Acts as a chaperone. This is Chaperone protein DnaK from Clostridium botulinum (strain Okra / Type B1).